The primary structure comprises 122 residues: Large ribosomal subunit protein uL14 (122 aa).

This sequence belongs to the universal ribosomal protein uL14 family. As to quaternary structure, part of the 50S ribosomal subunit. Forms a cluster with proteins L3 and L19. In the 70S ribosome, L14 and L19 interact and together make contacts with the 16S rRNA in bridges B5 and B8.

Functionally, binds to 23S rRNA. Forms part of two intersubunit bridges in the 70S ribosome. The sequence is that of Large ribosomal subunit protein uL14 from Parafrankia sp. (strain EAN1pec).